Reading from the N-terminus, the 343-residue chain is Programmed cell death protein 2 (343 aa).

Residues cysteine 134, cysteine 137, cysteine 145, cysteine 148, cysteine 154, histidine 158, histidine 167, and cysteine 171 each contribute to the Zn(2+) site. Residues 134 to 171 form an MYND-type; atypical zinc finger; sequence CRVCGCLAPMTCSRCKQAHYCSKEHQTLDWQLGHKQAC.

Post-translationally, ubiquitinated by PRKN, promoting proteasomal degradation.

The protein resides in the nucleus. Its function is as follows. May be a DNA-binding protein with a regulatory function. May play an important role in cell death and/or in regulation of cell proliferation. The chain is Programmed cell death protein 2 (Pdcd2) from Rattus norvegicus (Rat).